A 1182-amino-acid polypeptide reads, in one-letter code: MYMKITKIDGVSHYKKQDKGILKKKWKDLDERKQREKIEARYNKQIESKIYKEFFRLKNKKRIEKEEDQNIKSLYFFIKELYLNEKNEEWELKNINLEILDDKERVIKGYKFKEDVYFFKEGYKEYYLRILFNNLIEKVQNENREKVRKNKEFLDLKEIFKKYKNRKIDLLLKSINNNKINLEYKKENVNEEIYGINPTNDREMTFYELLKEIIEKKDEQKSILEEKLDNFDITNFLENIEKIFNEETEINIIKGKVLNELREYIKEKEENNSDNKLKQIYNLELKKYIENNFSYKKQKSKSKNGKNDYLYLNFLKKIMFIEEVDEKKEINKEKFKNKINSNFKNLFVQHILDYGKLLYYKENDEYIKNTGQLETKDLEYIKTKETLIRKMAVLVSFAANSYYNLFGRVSGDILGTEVVKSSKTNVIKVGSHIFKEKMLNYFFDFEIFDANKIVEILESISYSIYNVRNGVGHFNKLILGKYKKKDINTNKRIEEDLNNNEEIKGYFIKKRGEIERKVKEKFLSNNLQYYYSKEKIENYFEVYEFEILKRKIPFAPNFKRIIKKGEDLFNNKNNKKYEYFKNFDKNSAEEKKEFLKTRNFLLKELYYNNFYKEFLSKKEEFEKIVLEVKEEKKSRGNINNKKSGVSFQSIDDYDTKINISDYIASIHKKEMERVEKYNEEKQKDTAKYIRDFVEEIFLTGFINYLEKDKRLHFLKEEFSILCNNNNNVVDFNININEEKIKEFLKENDSKTLNLYLFFNMIDSKRISEFRNELVKYKQFTKKRLDEEKEFLGIKIELYETLIEFVILTREKLDTKKSEEIDAWLVDKLYVKDSNEYKEYEEILKLFVDEKILSSKEAPYYATDNKTPILLSNFEKTRKYGTQSFLSEIQSNYKYSKVEKENIEDYNKKEEIEQKKKSNIEKLQDLKVELHKKWEQNKITEKEIEKYNNTTRKINEYNYLKNKEELQNVYLLHEMLSDLLARNVAFFNKWERDFKFIVIAIKQFLRENDKEKVNEFLNPPDNSKGKKVYFSVSKYKNTVENIDGIHKNFMNLIFLNNKFMNRKIDKMNCAIWVYFRNYIAHFLHLHTKNEKISLISQMNLLIKLFSYDKKVQNHILKSTKTLLEKYNIQINFEISNDKNEVFKYKIKNRLYSKKGKMLGKNNKFEILENEFLENVKAMLEYSE.

Positions 132 to 279 form a coiled coil; sequence FNNLIEKVQN…ENNSDNKLKQ (148 aa). The HEPN-like fold 1 stretch occupies residues 366–508; the sequence is YIKNTGQLET…NNEEIKGYFI (143 aa). A coiled-coil region spans residues 896 to 955; it reads KVEKENIEDYNKKEEIEQKKKSNIEKLQDLKVELHKKWEQNKITEKEIEKYNNTTRKINE. The interval 965–1120 is HEPN-like fold 2; sequence LQNVYLLHEM…QNHILKSTKT (156 aa).

Belongs to the CRISPR-associated endoribonuclease Cas13a family. It depends on a divalent metal cation as a cofactor.

Its activity is regulated as follows. Target RNA acts as an activator for non-specific ssRNA degradation. CRISPR (clustered regularly interspaced short palindromic repeat), is an adaptive immune system that provides protection against mobile genetic elements (viruses, transposable elements and conjugative plasmids). CRISPR clusters contain sequences complementary to antecedent mobile elements and target invading nucleic acids. Unlike many single-component effectors, this CRISPR-Cas system targets RNA. CRISPR clusters are transcribed from pre-CRISPR RNA (crRNA) and processed into crRNA by this protein. Cleaves linear target ssRNA in a pre-crRNA-dependent fashion, preferentially before U residues. Binding a viable target RNA target activates this protein for non-specific RNA degradation in vitro (called collateral RNA degradation), which is fairly sensitive as it requires picomolar levels of viable target RNA. The protein is CRISPR-associated endoribonuclease Cas13a of Leptotrichia wadei (strain F0279).